The primary structure comprises 267 residues: Thiazole synthase (267 aa).

The active-site Schiff-base intermediate with DXP is lysine 101. Residues glycine 162, 188-189, and 210-211 contribute to the 1-deoxy-D-xylulose 5-phosphate site; these read AG and NT. The tract at residues 247–267 is disordered; sequence HASPSSPAAGVPCLPDPEVPV.

Belongs to the ThiG family. In terms of assembly, homotetramer. Forms heterodimers with either ThiH or ThiS.

Its subcellular location is the cytoplasm. The enzyme catalyses [ThiS sulfur-carrier protein]-C-terminal-Gly-aminoethanethioate + 2-iminoacetate + 1-deoxy-D-xylulose 5-phosphate = [ThiS sulfur-carrier protein]-C-terminal Gly-Gly + 2-[(2R,5Z)-2-carboxy-4-methylthiazol-5(2H)-ylidene]ethyl phosphate + 2 H2O + H(+). It functions in the pathway cofactor biosynthesis; thiamine diphosphate biosynthesis. Functionally, catalyzes the rearrangement of 1-deoxy-D-xylulose 5-phosphate (DXP) to produce the thiazole phosphate moiety of thiamine. Sulfur is provided by the thiocarboxylate moiety of the carrier protein ThiS. In vitro, sulfur can be provided by H(2)S. This Deinococcus geothermalis (strain DSM 11300 / CIP 105573 / AG-3a) protein is Thiazole synthase.